An 842-amino-acid chain; its full sequence is Alanine--tRNA ligase (842 aa).

4 residues coordinate Zn(2+): H549, H553, C650, and H654.

Belongs to the class-II aminoacyl-tRNA synthetase family. Zn(2+) is required as a cofactor.

The protein resides in the cytoplasm. It catalyses the reaction tRNA(Ala) + L-alanine + ATP = L-alanyl-tRNA(Ala) + AMP + diphosphate. In terms of biological role, catalyzes the attachment of alanine to tRNA(Ala) in a two-step reaction: alanine is first activated by ATP to form Ala-AMP and then transferred to the acceptor end of tRNA(Ala). Also edits incorrectly charged Ser-tRNA(Ala) and Gly-tRNA(Ala) via its editing domain. The protein is Alanine--tRNA ligase of Campylobacter jejuni subsp. doylei (strain ATCC BAA-1458 / RM4099 / 269.97).